We begin with the raw amino-acid sequence, 261 residues long: MRVALGIEYDGSQYFGWQRQAEVDTVQERLEKALSIVANEPIAVQCAGRTDAGVHATGQVVHFETNAVRKDTAWTLGVNVNLPDNIAVRWVKVVDDEFHARFTATARRYRYMIYNHQLRPGILRSGVSHYPGVIDEAKMHQAAQYLLGEQDFTSFRAVQCQSNTPFRCVHEVNVSRQGMYICVDIKANAFLHHMVRNIVGSLLEVGLGNQPIEWIEQLLALKDRNKAAATAKPNGLYLVDVTYPESYQLPKLSLGPLFMLD.

Aspartate 51 acts as the Nucleophile in catalysis. Tyrosine 109 serves as a coordination point for substrate.

The protein belongs to the tRNA pseudouridine synthase TruA family. In terms of assembly, homodimer.

The catalysed reaction is uridine(38/39/40) in tRNA = pseudouridine(38/39/40) in tRNA. Formation of pseudouridine at positions 38, 39 and 40 in the anticodon stem and loop of transfer RNAs. The polypeptide is tRNA pseudouridine synthase A (Shewanella halifaxensis (strain HAW-EB4)).